Consider the following 380-residue polypeptide: Chaperone protein DnaJ (380 aa).

Positions 5-70 (DYYEALGVAR…RKRTAYDQFG (66 aa)) constitute a J domain. Residues 137-215 (GTTAKIRIPT…CRGEGRVREH (79 aa)) form a CR-type zinc finger. Zn(2+) is bound by residues C150, C153, C167, C170, C189, C192, C203, and C206. CXXCXGXG motif repeat units follow at residues 150–157 (CKACEGSG), 167–174 (CPTCGGHG), 189–196 (CPRCHGSG), and 203–210 (CSTCRGEG). The tract at residues 222 to 247 (IPPGVDTGDRIRLTGEGEAGESGGPP) is disordered.

This sequence belongs to the DnaJ family. In terms of assembly, homodimer. It depends on Zn(2+) as a cofactor.

Its subcellular location is the cytoplasm. Its function is as follows. Participates actively in the response to hyperosmotic and heat shock by preventing the aggregation of stress-denatured proteins and by disaggregating proteins, also in an autonomous, DnaK-independent fashion. Unfolded proteins bind initially to DnaJ; upon interaction with the DnaJ-bound protein, DnaK hydrolyzes its bound ATP, resulting in the formation of a stable complex. GrpE releases ADP from DnaK; ATP binding to DnaK triggers the release of the substrate protein, thus completing the reaction cycle. Several rounds of ATP-dependent interactions between DnaJ, DnaK and GrpE are required for fully efficient folding. Also involved, together with DnaK and GrpE, in the DNA replication of plasmids through activation of initiation proteins. In Nitrosococcus oceani (strain ATCC 19707 / BCRC 17464 / JCM 30415 / NCIMB 11848 / C-107), this protein is Chaperone protein DnaJ.